Consider the following 493-residue polypeptide: Monodehydroascorbate reductase, chloroplastic/mitochondrial (493 aa).

A chloroplast and mitochondrion-targeting transit peptide spans 1-51; it reads MSAVRRVMALASTTLPTKSGLSLWCPSSPSLARRFPARFSPIGSRIASRSL. Residues 68 to 71, Glu-95, Arg-102, Lys-107, and 201 to 202 contribute to the FAD site; these read GGNA and RE. NAD(+)-binding positions include 224–230, Glu-248, Arg-254, and Gly-313; that span reads GGYIGME. Position 226–230 (226–230) interacts with NADP(+); it reads YIGME. NADP(+) contacts are provided by Arg-254 and Gly-313. FAD is bound at residue Asp-351. 367-368 serves as a coordination point for NAD(+); the sequence is EH. 367–368 provides a ligand contact to NADP(+); the sequence is EH. Position 369 (Val-369) interacts with FAD. An L-ascorbate-binding site is contributed by Arg-373. Residue Tyr-398 participates in FAD binding. NAD(+) is bound at residue Tyr-398. Tyr-398 serves as a coordination point for NADP(+). Arg-400 contributes to the L-ascorbate binding site.

Belongs to the FAD-dependent oxidoreductase family. Interacts in vitro with TRXy. The cofactor is FAD.

The protein resides in the plastid. It is found in the chloroplast. The protein localises to the mitochondrion. It catalyses the reaction 2 monodehydro-L-ascorbate radical + NADH + H(+) = 2 L-ascorbate + NAD(+). It carries out the reaction 2,4,6-trinitrotoluene + NADH = 2,4,6-trinitrotoluene radical + e(-) + NAD(+). Redox regulation of the activity by thioredoxin TRXy1. Its function is as follows. Catalyzes the conversion of monodehydroascorbate (MDA) to ascorbate, oxidizing NADH in the process. Mediates phytotoxicity of 2,4,6-trinitrotoluene (TNT), an explosive and environmental pollutant, by reducing TNT and forming a nitro radical that spontaneously reacts with atmospheric oxygen, generating reactive superoxide. Can also use 1-chloro-2,4-dinitrobenzene (CDNB) as substrate, but not 1-chloro-4-nitrobenzene (CNB). This Arabidopsis thaliana (Mouse-ear cress) protein is Monodehydroascorbate reductase, chloroplastic/mitochondrial.